The following is a 389-amino-acid chain: S-adenosylmethionine synthase (389 aa).

Histidine 17 provides a ligand contact to ATP. Mg(2+) is bound at residue aspartate 19. Glutamate 45 serves as a coordination point for K(+). L-methionine contacts are provided by glutamate 58 and glutamine 102. A flexible loop region spans residues 102 to 112 (QSADIAQGVDA). ATP is bound by residues 167-169 (DAK), aspartate 241, 247-248 (RK), alanine 264, and lysine 268. Aspartate 241 is an L-methionine binding site. Lysine 272 contributes to the L-methionine binding site.

This sequence belongs to the AdoMet synthase family. Homotetramer; dimer of dimers. Mg(2+) is required as a cofactor. Requires K(+) as cofactor.

Its subcellular location is the cytoplasm. The catalysed reaction is L-methionine + ATP + H2O = S-adenosyl-L-methionine + phosphate + diphosphate. It participates in amino-acid biosynthesis; S-adenosyl-L-methionine biosynthesis; S-adenosyl-L-methionine from L-methionine: step 1/1. In terms of biological role, catalyzes the formation of S-adenosylmethionine (AdoMet) from methionine and ATP. The overall synthetic reaction is composed of two sequential steps, AdoMet formation and the subsequent tripolyphosphate hydrolysis which occurs prior to release of AdoMet from the enzyme. The polypeptide is S-adenosylmethionine synthase (Parvibaculum lavamentivorans (strain DS-1 / DSM 13023 / NCIMB 13966)).